A 243-amino-acid polypeptide reads, in one-letter code: Adenosylcobinamide-GDP ribazoletransferase (243 aa).

The next 5 helical transmembrane spans lie at 31–51, 55–75, 109–129, 135–155, and 188–208; these read LLFY…FNAL, APLL…SGGL, IAVV…VALI, IGLL…FLGT, and VVLA…CFYW.

It belongs to the CobS family. Requires Mg(2+) as cofactor.

Its subcellular location is the cell inner membrane. It carries out the reaction alpha-ribazole + adenosylcob(III)inamide-GDP = adenosylcob(III)alamin + GMP + H(+). The catalysed reaction is alpha-ribazole 5'-phosphate + adenosylcob(III)inamide-GDP = adenosylcob(III)alamin 5'-phosphate + GMP + H(+). It functions in the pathway cofactor biosynthesis; adenosylcobalamin biosynthesis; adenosylcobalamin from cob(II)yrinate a,c-diamide: step 7/7. In terms of biological role, joins adenosylcobinamide-GDP and alpha-ribazole to generate adenosylcobalamin (Ado-cobalamin). Also synthesizes adenosylcobalamin 5'-phosphate from adenosylcobinamide-GDP and alpha-ribazole 5'-phosphate. The chain is Adenosylcobinamide-GDP ribazoletransferase from Pseudomonas syringae pv. tomato (strain ATCC BAA-871 / DC3000).